Here is a 464-residue protein sequence, read N- to C-terminus: 3-isopropylmalate dehydratase large subunit (464 aa).

Residues cysteine 337, cysteine 397, and cysteine 400 each coordinate [4Fe-4S] cluster.

This sequence belongs to the aconitase/IPM isomerase family. LeuC type 1 subfamily. Heterodimer of LeuC and LeuD. Requires [4Fe-4S] cluster as cofactor.

It carries out the reaction (2R,3S)-3-isopropylmalate = (2S)-2-isopropylmalate. It functions in the pathway amino-acid biosynthesis; L-leucine biosynthesis; L-leucine from 3-methyl-2-oxobutanoate: step 2/4. In terms of biological role, catalyzes the isomerization between 2-isopropylmalate and 3-isopropylmalate, via the formation of 2-isopropylmaleate. The protein is 3-isopropylmalate dehydratase large subunit of Bacillus cereus (strain AH820).